Reading from the N-terminus, the 152-residue chain is Protein ripply3 (152 aa).

Basic and acidic residues predominate over residues 1 to 24; it reads MRPEAAGVREARGRLCHCPGDDPG. Disordered regions lie at residues 1 to 76 and 113 to 152; these read MRPE…GAFG and FYND…ERAE. A WRPW motif motif is present at residues 40-43; it reads WRPW. A ripply homology domain region spans residues 79–114; it reads HPVRLYLPVSKRQEYLQSSGEKVLASFPVQATIHFY. A compositionally biased stretch (acidic residues) spans 116–130; it reads DDSESGSEEEQEEEA. The span at 140–152 shows a compositional bias: basic and acidic residues; that stretch reads AEVRDSAQEERAE.

Belongs to the ripply family. Interacts with TBX1.

It is found in the nucleus. Its function is as follows. Acts as a transcriptional corepressor. Negative regulator of the transcriptional activity of TBX1. Plays a role in the development of the pharyngeal apparatus and derivatives. The sequence is that of Protein ripply3 (Ripply3) from Mus musculus (Mouse).